A 205-amino-acid polypeptide reads, in one-letter code: Large ribosomal subunit protein bL25 (205 aa).

Positions 184–205 (QPAGAVSEAAEGGEAAGETPAA) are disordered. Positions 186–205 (AGAVSEAAEGGEAAGETPAA) are enriched in low complexity.

The protein belongs to the bacterial ribosomal protein bL25 family. CTC subfamily. As to quaternary structure, part of the 50S ribosomal subunit; part of the 5S rRNA/L5/L18/L25 subcomplex. Contacts the 5S rRNA. Binds to the 5S rRNA independently of L5 and L18.

This is one of the proteins that binds to the 5S RNA in the ribosome where it forms part of the central protuberance. The protein is Large ribosomal subunit protein bL25 of Cupriavidus necator (strain ATCC 17699 / DSM 428 / KCTC 22496 / NCIMB 10442 / H16 / Stanier 337) (Ralstonia eutropha).